We begin with the raw amino-acid sequence, 182 residues long: PTS system glucitol/sorbitol-specific EIIC component (182 aa).

The PTS EIIC type-5 domain occupies Met-1–Asn-182. Transmembrane regions (helical) follow at residues Gly-28–Gly-48, Val-63–Ala-83, and Thr-139–Val-159.

The protein localises to the cell membrane. The phosphoenolpyruvate-dependent sugar phosphotransferase system (PTS), a major carbohydrate active transport system, catalyzes the phosphorylation of incoming sugar substrates concomitant with their translocation across the cell membrane. The enzyme II complex composed of SrlA, SrlB and SrlE is involved in glucitol/sorbitol transport. This Clostridium beijerinckii (strain ATCC 51743 / NCIMB 8052) (Clostridium acetobutylicum) protein is PTS system glucitol/sorbitol-specific EIIC component (srlA).